The primary structure comprises 312 residues: Ribonuclease Z (312 aa).

Zn(2+) contacts are provided by His-63, His-65, Asp-67, His-68, His-140, Asp-211, and His-269. Residue Asp-67 is the Proton acceptor of the active site.

This sequence belongs to the RNase Z family. Homodimer. It depends on Zn(2+) as a cofactor.

The enzyme catalyses Endonucleolytic cleavage of RNA, removing extra 3' nucleotides from tRNA precursor, generating 3' termini of tRNAs. A 3'-hydroxy group is left at the tRNA terminus and a 5'-phosphoryl group is left at the trailer molecule.. In terms of biological role, zinc phosphodiesterase, which displays some tRNA 3'-processing endonuclease activity. Probably involved in tRNA maturation, by removing a 3'-trailer from precursor tRNA. The sequence is that of Ribonuclease Z from Anoxybacillus flavithermus (strain DSM 21510 / WK1).